The chain runs to 271 residues: Phosphate import ATP-binding protein PstB (271 aa).

In terms of domain architecture, ABC transporter spans Phe25–Ile266. Residue Gly57 to Ser64 coordinates ATP.

The protein belongs to the ABC transporter superfamily. Phosphate importer (TC 3.A.1.7) family. The complex is composed of two ATP-binding proteins (PstB), two transmembrane proteins (PstC and PstA) and a solute-binding protein (PstS).

It localises to the cell membrane. The enzyme catalyses phosphate(out) + ATP + H2O = ADP + 2 phosphate(in) + H(+). In terms of biological role, part of the ABC transporter complex PstSACB involved in phosphate import. Responsible for energy coupling to the transport system. This chain is Phosphate import ATP-binding protein PstB, found in Bacillus cereus (strain ATCC 14579 / DSM 31 / CCUG 7414 / JCM 2152 / NBRC 15305 / NCIMB 9373 / NCTC 2599 / NRRL B-3711).